The sequence spans 298 residues: Interferon-inducible double-stranded RNA-dependent protein kinase activator A homolog B (298 aa).

DRBM domains are found at residues 20–87 (TPIQ…ILRG), 112–180 (NPVG…KFKT), and 225–293 (DYVK…YLKI).

Belongs to the PRKRA family. As to quaternary structure, homodimer. Interacts with dicer1 and eif2ak2/pkr. Also able to interact with dsRNA. Associates with ribosomes. As to expression, expressed in brain, heart, kidney, liver, nerve and spleen.

It localises to the cytoplasm. The protein resides in the perinuclear region. The protein localises to the nucleus. It is found in the nucleolus. Functionally, activates eif2ak2/pkr in the absence of double-stranded RNA (dsRNA), leading to phosphorylation of eif2s1/efi2-alpha and inhibition of translation and induction of apoptosis. Required for siRNA production by dicer1 and for subsequent siRNA-mediated post-transcriptional gene silencing. Does not seem to be required for processing of pre-miRNA to miRNA by dicer1. The protein is Interferon-inducible double-stranded RNA-dependent protein kinase activator A homolog B (prkra-b) of Xenopus laevis (African clawed frog).